We begin with the raw amino-acid sequence, 59 residues long: Sec-independent protein translocase protein TatA (59 aa).

The chain crosses the membrane as a helical span at residues 1-21; it reads MFSNIGFPGLILILVAVLILF.

Belongs to the TatA/E family. As to quaternary structure, forms a complex with TatC.

It localises to the cell membrane. Its function is as follows. Part of the twin-arginine translocation (Tat) system that transports large folded proteins containing a characteristic twin-arginine motif in their signal peptide across membranes. TatA could form the protein-conducting channel of the Tat system. This is Sec-independent protein translocase protein TatA from Bacillus mycoides (strain KBAB4) (Bacillus weihenstephanensis).